The primary structure comprises 506 residues: ESX-5 secretion system ATPase EccB5 (506 aa).

The helical transmembrane segment at 56–76 (VVASVSAALVICLGALLWSFI) threads the bilayer.

Belongs to the EccB family. As to quaternary structure, part of the ESX-5 / type VII secretion system (T7SS), which is composed of cytosolic and membrane components. The ESX-5 membrane complex is composed of EccB5, EccC5, EccD5 and EccE5.

The protein resides in the cell inner membrane. Functionally, an ATPase. Part of the ESX-5 specialized secretion system, which is responsible for the secretion of EsxN and a number of PE_PGRS and PPE proteins, including PPE41. In Mycobacterium tuberculosis (strain CDC 1551 / Oshkosh), this protein is ESX-5 secretion system ATPase EccB5.